The sequence spans 728 residues: Elongation factor 2 (728 aa).

In terms of domain architecture, tr-type G spans 19-261 (EHIRNIAIAA…MVCEHFPNPV (243 aa)). Residues 28 to 35 (AHVDHGKT), 94 to 98 (DTPGH), and 148 to 151 (NKVD) contribute to the GTP site. Residue histidine 596 is modified to Diphthamide.

It belongs to the TRAFAC class translation factor GTPase superfamily. Classic translation factor GTPase family. EF-G/EF-2 subfamily.

It localises to the cytoplasm. Functionally, catalyzes the GTP-dependent ribosomal translocation step during translation elongation. During this step, the ribosome changes from the pre-translocational (PRE) to the post-translocational (POST) state as the newly formed A-site-bound peptidyl-tRNA and P-site-bound deacylated tRNA move to the P and E sites, respectively. Catalyzes the coordinated movement of the two tRNA molecules, the mRNA and conformational changes in the ribosome. This is Elongation factor 2 from Haloarcula marismortui (strain ATCC 43049 / DSM 3752 / JCM 8966 / VKM B-1809) (Halobacterium marismortui).